Reading from the N-terminus, the 339-residue chain is Dihydroorotase (339 aa).

The Zn(2+) site is built by H12 and H14. Substrate is bound by residues 14-16 (HVR) and N40. Residues K94, H133, H167, and D239 each contribute to the Zn(2+) site. Residue K94 is modified to N6-carboxylysine. H133 contributes to the substrate binding site. D239 is a catalytic residue. Substrate-binding residues include H243 and A255.

The protein belongs to the metallo-dependent hydrolases superfamily. DHOase family. Class II DHOase subfamily. As to quaternary structure, homodimer. It depends on Zn(2+) as a cofactor.

The enzyme catalyses (S)-dihydroorotate + H2O = N-carbamoyl-L-aspartate + H(+). The protein operates within pyrimidine metabolism; UMP biosynthesis via de novo pathway; (S)-dihydroorotate from bicarbonate: step 3/3. Its function is as follows. Catalyzes the reversible cyclization of carbamoyl aspartate to dihydroorotate. This is Dihydroorotase from Helicobacter pylori (strain P12).